A 246-amino-acid polypeptide reads, in one-letter code: Triosephosphate isomerase (246 aa).

9–11 (NWK) lines the substrate pocket. Residue H99 is the Electrophile of the active site. Residue E168 is the Proton acceptor of the active site. Residues G174, S207, and 228 to 229 (GG) each bind substrate.

The protein belongs to the triosephosphate isomerase family. Homodimer.

Its subcellular location is the cytoplasm. The catalysed reaction is D-glyceraldehyde 3-phosphate = dihydroxyacetone phosphate. Its pathway is carbohydrate biosynthesis; gluconeogenesis. The protein operates within carbohydrate degradation; glycolysis; D-glyceraldehyde 3-phosphate from glycerone phosphate: step 1/1. Functionally, involved in the gluconeogenesis. Catalyzes stereospecifically the conversion of dihydroxyacetone phosphate (DHAP) to D-glyceraldehyde-3-phosphate (G3P). This Prochlorococcus marinus (strain NATL2A) protein is Triosephosphate isomerase.